The following is a 336-amino-acid chain: tRNA N6-adenosine threonylcarbamoyltransferase (336 aa).

Fe cation contacts are provided by histidine 111 and histidine 115. Substrate is bound by residues 134 to 138, aspartate 167, glycine 180, and asparagine 270; that span reads LVSGG. Residue aspartate 298 coordinates Fe cation.

This sequence belongs to the KAE1 / TsaD family. It depends on Fe(2+) as a cofactor.

The protein resides in the cytoplasm. The enzyme catalyses L-threonylcarbamoyladenylate + adenosine(37) in tRNA = N(6)-L-threonylcarbamoyladenosine(37) in tRNA + AMP + H(+). In terms of biological role, required for the formation of a threonylcarbamoyl group on adenosine at position 37 (t(6)A37) in tRNAs that read codons beginning with adenine. Is involved in the transfer of the threonylcarbamoyl moiety of threonylcarbamoyl-AMP (TC-AMP) to the N6 group of A37, together with TsaE and TsaB. TsaD likely plays a direct catalytic role in this reaction. In Acinetobacter baumannii (strain AB307-0294), this protein is tRNA N6-adenosine threonylcarbamoyltransferase.